A 100-amino-acid chain; its full sequence is Large ribosomal subunit protein bL21 (100 aa).

This sequence belongs to the bacterial ribosomal protein bL21 family. In terms of assembly, part of the 50S ribosomal subunit. Contacts protein L20.

Its function is as follows. This protein binds to 23S rRNA in the presence of protein L20. In Mycoplasma genitalium (strain ATCC 33530 / DSM 19775 / NCTC 10195 / G37) (Mycoplasmoides genitalium), this protein is Large ribosomal subunit protein bL21.